The following is a 330-amino-acid chain: tRNA (cytosine(38)-C(5))-methyltransferase (330 aa).

The region spanning 7–330 (LRVLELYSGI…ISLLLEPLNF (324 aa)) is the SAM-dependent MTase C5-type domain. Cys81 is an active-site residue.

The protein belongs to the class I-like SAM-binding methyltransferase superfamily. C5-methyltransferase family.

The protein resides in the cytoplasm. Its subcellular location is the nucleus. The enzyme catalyses cytidine(38) in tRNA + S-adenosyl-L-methionine = 5-methylcytidine(38) in tRNA + S-adenosyl-L-homocysteine + H(+). Specifically methylates cytosine 38 in the anticodon loop of tRNA(Asp). Can also methylate cytosine 38 in tRNA(Glu), albeit to a lower level, but not tRNA(Lys). Pmt1-dependent tRNA methylation is induced by nitrogen limitation and depends on the nutrient-sensing protein kinase sck2. Does not have DNA-methylation activity. This is tRNA (cytosine(38)-C(5))-methyltransferase (pmt1) from Schizosaccharomyces pombe (strain 972 / ATCC 24843) (Fission yeast).